The chain runs to 1413 residues: DNA-directed RNA polymerase subunit beta' (1413 aa).

The Zn(2+) site is built by cysteine 70, cysteine 72, cysteine 85, and cysteine 88. 3 residues coordinate Mg(2+): aspartate 460, aspartate 462, and aspartate 464. Cysteine 819, cysteine 893, cysteine 900, and cysteine 903 together coordinate Zn(2+).

It belongs to the RNA polymerase beta' chain family. The RNAP catalytic core consists of 2 alpha, 1 beta, 1 beta' and 1 omega subunit. When a sigma factor is associated with the core the holoenzyme is formed, which can initiate transcription. The cofactor is Mg(2+). Zn(2+) serves as cofactor.

The catalysed reaction is RNA(n) + a ribonucleoside 5'-triphosphate = RNA(n+1) + diphosphate. DNA-dependent RNA polymerase catalyzes the transcription of DNA into RNA using the four ribonucleoside triphosphates as substrates. In Burkholderia ambifaria (strain MC40-6), this protein is DNA-directed RNA polymerase subunit beta'.